Reading from the N-terminus, the 75-residue chain is Defensin J1-1 (75 aa).

The signal sequence occupies residues 1–27 (MAGFSKVVATIFLMMLLVFATDMMAEA). 4 disulfide bridges follow: cysteine 30-cysteine 74, cysteine 41-cysteine 61, cysteine 47-cysteine 68, and cysteine 51-cysteine 70.

Belongs to the DEFL family. As to quaternary structure, monomer. In terms of tissue distribution, expressed in orange and red ripe fruit and to a lesser extent in mature, green fruit. Present in trace in young, green fruit.

It localises to the secreted. Functionally, plant defense peptide with antifungal activity against F.oxysporum and B.cinerea. This chain is Defensin J1-1, found in Capsicum annuum (Capsicum pepper).